Consider the following 442-residue polypeptide: MPAIAVLAAAAAAWCFLQVDSRHLDALAGGAALNNANFLDNDQWLSTVSQYDRDKYWNRFRDGIQDDYFRNWNPNKPFDQALDPSKDPCLKVKCSPHKVCVTQDYQTALCVSRKHLLPRQKKGNVAHKHWLGPSNLVKCKPCPVAQSAMVCGSDGHTYTSKCKLEFHACSTGKSLNSLCDGPCPCLPEPEPLKPKAEKSACTDKELRNLASRLKDWFGALHEDANRVIKPTSSDPAQGRFDTSILPICKDSLGWMFNKLDMNYDLLLDHSEINAIYLDKYEPCIKPLFNSCDSFKDGKLSNNEWCYCFQKPAGLPCQNEMNRIQKLSKGKSLLGAFIPRCNEEGYYKATQCHGSTGQCWCVDKYGNELAGSRKQGTVSCEEEQETSGDFGSGGSVVLLDDLEDERELGPKDKEGKLRVRTRAVREDDEDEDDDKEDEVGYIW.

The N-terminal stretch at 1–21 is a signal peptide; it reads MPAIAVLAAAAAAWCFLQVDS. 8 disulfides stabilise this stretch: Cys89–Cys100, Cys94–Cys110, Cys139–Cys169, Cys142–Cys162, Cys151–Cys183, Cys316–Cys340, Cys351–Cys358, and Cys360–Cys379. Residues 133 to 185 enclose the Kazal-like domain; that stretch reads PSNLVKCKPCPVAQSAMVCGSDGHTYTSKCKLEFHACSTGKSLNSLCDGPCPC. The Thyroglobulin type-1 domain occupies 313-379; that stretch reads GLPCQNEMNR…GSRKQGTVSC (67 aa). Disordered stretches follow at residues 375 to 395 and 420 to 442; these read GTVSCEEEQETSGDFGSGGSV and TRAVREDDEDEDDDKEDEVGYIW. Residues Ser386 and Ser391 are each glycosylated (O-linked (Xyl...) (glycosaminoglycan) serine). Residues 425–442 are compositionally biased toward acidic residues; it reads EDDEDEDDDKEDEVGYIW.

Post-translationally, contains chondroitin sulfate and heparan sulfate O-linked oligosaccharides. Predominantly expressed in the postsynaptic area of pyramidal neurons.

It is found in the secreted. It localises to the extracellular space. The protein localises to the extracellular matrix. Its function is as follows. May play a role in cell-cell and cell-matrix interactions. May contribute to various neuronal mechanisms in the central nervous system. The sequence is that of Testican-1 (Spock1) from Mus musculus (Mouse).